The sequence spans 312 residues: tRNA pseudouridine synthase B (312 aa).

The active-site Nucleophile is Asp49.

This sequence belongs to the pseudouridine synthase TruB family. Type 1 subfamily.

The enzyme catalyses uridine(55) in tRNA = pseudouridine(55) in tRNA. Its function is as follows. Responsible for synthesis of pseudouridine from uracil-55 in the psi GC loop of transfer RNAs. The chain is tRNA pseudouridine synthase B from Chelativorans sp. (strain BNC1).